A 56-amino-acid chain; its full sequence is UPF0434 protein CBUD_1597.1 (56 aa).

This sequence belongs to the UPF0434 family.

The protein is UPF0434 protein CBUD_1597.1 of Coxiella burnetii (strain Dugway 5J108-111).